A 301-amino-acid polypeptide reads, in one-letter code: Putative carboxypeptidase slr1534 (301 aa).

Catalysis depends on S116, which acts as the Nucleophile. Residues E206 and H276 each act as charge relay system in the active site.

Belongs to the peptidase S66 family.

The chain is Putative carboxypeptidase slr1534 from Synechocystis sp. (strain ATCC 27184 / PCC 6803 / Kazusa).